Consider the following 295-residue polypeptide: Mediator of RNA polymerase II transcription subunit 27 (295 aa).

It belongs to the Mediator complex subunit 27 family. As to quaternary structure, component of the Mediator complex.

Its subcellular location is the nucleus. Its function is as follows. Component of the Mediator complex, a coactivator involved in the regulated transcription of nearly all RNA polymerase II-dependent genes. Mediator functions as a bridge to convey information from gene-specific regulatory proteins to the basal RNA polymerase II transcription machinery. Mediator is recruited to promoters by direct interactions with regulatory proteins and serves as a scaffold for the assembly of a functional preinitiation complex with RNA polymerase II and the general transcription factors. The chain is Mediator of RNA polymerase II transcription subunit 27 (MED27) from Anopheles gambiae (African malaria mosquito).